The sequence spans 155 residues: Riboflavin kinase (155 aa).

ATP contacts are provided by G15, K21, T27, and N29. Residues T27 and N29 each contribute to the Mg(2+) site. The Nucleophile role is filled by E79. Residues I82, H84, and Y91 each coordinate ATP. Positions 104, 107, and 109 each coordinate FMN.

As to quaternary structure, monomer. Directly interacts with TNFRSF1A death domain. TNFRSF1A-binding may be supported by TRADD. In the absence of TNFRSF1A, interacts with TRADD. Independently of TNFRSF1A, interacts with the NADPH oxidase subunit CYBA. It depends on Zn(2+) as a cofactor. Requires Mg(2+) as cofactor. Detected in brain, placenta and urinary bladder.

Its subcellular location is the cytoplasm. The enzyme catalyses riboflavin + ATP = FMN + ADP + H(+). It functions in the pathway cofactor biosynthesis; FMN biosynthesis; FMN from riboflavin (ATP route): step 1/1. Catalyzes the phosphorylation of riboflavin (vitamin B2) to form flavin-mononucleotide (FMN), hence rate-limiting enzyme in the synthesis of FAD. Essential for TNF-induced reactive oxygen species (ROS) production. Through its interaction with both TNFRSF1A and CYBA, physically and functionally couples TNFRSF1A to NADPH oxidase. TNF-activation of RFK may enhance the incorporation of FAD in NADPH oxidase, a critical step for the assembly and activation of NADPH oxidase. The protein is Riboflavin kinase (RFK) of Homo sapiens (Human).